A 305-amino-acid chain; its full sequence is Aspartate carbamoyltransferase catalytic subunit (305 aa).

Residues Arg-53 and Thr-54 each coordinate carbamoyl phosphate. Lys-82 contributes to the L-aspartate binding site. Carbamoyl phosphate contacts are provided by Arg-103, His-131, and Gln-134. L-aspartate contacts are provided by Arg-164 and Arg-226. Leu-265 and Pro-266 together coordinate carbamoyl phosphate.

It belongs to the aspartate/ornithine carbamoyltransferase superfamily. ATCase family. In terms of assembly, heterooligomer of catalytic and regulatory chains.

It carries out the reaction carbamoyl phosphate + L-aspartate = N-carbamoyl-L-aspartate + phosphate + H(+). It functions in the pathway pyrimidine metabolism; UMP biosynthesis via de novo pathway; (S)-dihydroorotate from bicarbonate: step 2/3. In terms of biological role, catalyzes the condensation of carbamoyl phosphate and aspartate to form carbamoyl aspartate and inorganic phosphate, the committed step in the de novo pyrimidine nucleotide biosynthesis pathway. This chain is Aspartate carbamoyltransferase catalytic subunit, found in Ignicoccus hospitalis (strain KIN4/I / DSM 18386 / JCM 14125).